We begin with the raw amino-acid sequence, 130 residues long: Small ribosomal subunit protein uS9 (130 aa).

The tract at residues 107 to 130 (DARMKERKKPGLKKARKASQFSKR) is disordered. The segment covering 111-130 (KERKKPGLKKARKASQFSKR) has biased composition (basic residues).

The protein belongs to the universal ribosomal protein uS9 family.

This Ligilactobacillus salivarius (strain UCC118) (Lactobacillus salivarius) protein is Small ribosomal subunit protein uS9.